A 391-amino-acid chain; its full sequence is Somatostatin receptor type 1 (391 aa).

The tract at residues 1-50 (MFPNGTAPSPTSSPSSSPGGCGEGVCSRGPGSGAADGMEEPGRNSSQNGT) is disordered. The Extracellular segment spans residues 1 to 56 (MFPNGTAPSPTSSPSSSPGGCGEGVCSRGPGSGAADGMEEPGRNSSQNGTLSEGQG). Asn-4 carries N-linked (GlcNAc...) asparagine glycosylation. Positions 8-18 (PSPTSSPSSSP) are enriched in low complexity. Asn-44 and Asn-48 each carry an N-linked (GlcNAc...) asparagine glycan. Residues 57–84 (SAILISFIYSVVCLVGLCGNSMVIYVIL) form a helical membrane-spanning segment. Over 85 to 94 (RYAKMKTATN) the chain is Cytoplasmic. The helical transmembrane segment at 95–120 (IYILNLAIADELLMLSVPFLVTSTLL) threads the bilayer. The Extracellular segment spans residues 121–131 (RHWPFGALLCR). Cys-130 and Cys-208 are disulfide-bonded. Residues 132–153 (LVLSVDAVNMFTSIYCLTVLSV) traverse the membrane as a helical segment. At 154–175 (DRYVAVVHPIKAARYRRPTVAK) the chain is on the cytoplasmic side. The helical transmembrane segment at 176-196 (VVNLGVWVLSLLVILPIVVFS) threads the bilayer. Residues 197-219 (RTAANSDGTVACNMLMPEPAQRW) are Extracellular-facing. The chain crosses the membrane as a helical span at residues 220-244 (LVGFVLYTFLMGFLLPVGAICLCYV). At 245–270 (LIIAKMRMVALKAGWQQRKRSERKIT) the chain is on the cytoplasmic side. A helical membrane pass occupies residues 271-296 (LMVMMVVMVFVICWMPFYVVQLVNVF). At 297–303 (AEQDDAT) the chain is on the extracellular side. Residues 304–327 (VSQLSVILGYANSCANPILYGFLS) traverse the membrane as a helical segment. Topologically, residues 328-391 (DNFKRSFQRI…GTCASRISTL (64 aa)) are cytoplasmic. The S-palmitoyl cysteine moiety is linked to residue Cys-339.

It belongs to the G-protein coupled receptor 1 family. Brain, pituitary, islet, jejunum, stomach, heart, spleen.

It localises to the cell membrane. Functionally, receptor for somatostatin with higher affinity for somatostatin-14 than -28. This receptor is coupled to phosphotyrosine phosphatase and Na(+)/H(+) exchanger via pertussis toxin insensitive G proteins. The chain is Somatostatin receptor type 1 (Sstr1) from Rattus norvegicus (Rat).